A 72-amino-acid chain; its full sequence is Long neurotoxin OH-17 (72 aa).

5 cysteine pairs are disulfide-bonded: Cys-3–Cys-21, Cys-14–Cys-42, Cys-27–Cys-31, Cys-46–Cys-57, and Cys-58–Cys-63.

It belongs to the three-finger toxin family. Long-chain subfamily. Type II alpha-neurotoxin sub-subfamily. In terms of tissue distribution, expressed by the venom gland.

Its subcellular location is the secreted. Functionally, binds with high affinity to muscular (alpha-1/CHRNA1) and neuronal (alpha-7/CHRNA7) nicotinic acetylcholine receptor (nAChR) and inhibits acetylcholine from binding to the receptor, thereby impairing neuromuscular and neuronal transmission. This chain is Long neurotoxin OH-17, found in Ophiophagus hannah (King cobra).